We begin with the raw amino-acid sequence, 452 residues long: Pentatricopeptide repeat-containing protein At2g30780 (452 aa).

PPR repeat units lie at residues 137 to 171, 173 to 207, 208 to 242, 243 to 273, 350 to 384, 385 to 419, and 420 to 452; these read TASV…THCA, TVVT…KLPP, NSVT…PVEP, DTDT…IKDQ, KSSI…GWKL, CRSL…NYGL, and VTKT…KRGL.

The protein belongs to the PPR family. P subfamily.

The polypeptide is Pentatricopeptide repeat-containing protein At2g30780 (Arabidopsis thaliana (Mouse-ear cress)).